Reading from the N-terminus, the 101-residue chain is Urease subunit beta (101 aa).

It belongs to the urease beta subunit family. Heterotrimer of UreA (gamma), UreB (beta) and UreC (alpha) subunits. Three heterotrimers associate to form the active enzyme.

It localises to the cytoplasm. The catalysed reaction is urea + 2 H2O + H(+) = hydrogencarbonate + 2 NH4(+). Its pathway is nitrogen metabolism; urea degradation; CO(2) and NH(3) from urea (urease route): step 1/1. In Rhizobium rhizogenes (strain K84 / ATCC BAA-868) (Agrobacterium radiobacter), this protein is Urease subunit beta.